A 2381-amino-acid polypeptide reads, in one-letter code: Myb-like protein U (2381 aa).

4 disordered regions span residues 1–85 (MKTK…TSNN), 148–167 (SSSG…GGIS), 178–492 (PTIP…NNNN), and 641–696 (NINN…GDEM). Low complexity-rich tracts occupy residues 30-41 (SKSSSKVSQSSS) and 64-79 (TIPA…PTLT). Composition is skewed to low complexity over residues 192 to 204 (NLSS…NILS), 225 to 261 (ENVN…SSSS), and 291 to 315 (SNKS…NNKK). Residues 331–343 (SEYDSSDSSDMDL) show a composition bias toward acidic residues. Over residues 363–405 (TTKPNNSNSNNNNNNNSINSTIPASNNINSANNSKTTNKNITS) the composition is skewed to low complexity. The span at 421 to 430 (SETPILTSVK) shows a compositional bias: polar residues. Low complexity-rich tracts occupy residues 435–492 (QQIP…NNNN) and 641–692 (NINN…NNNN). Residues 856–899 (WHEEEKLLFRELFCAYGRDWQMVSTLMCGTKSPTQIKNFYYDVR) form the Myb-like domain. Disordered regions lie at residues 932-1024 (KPEQ…ETPP), 1068-1093 (INQS…NINP), 1145-1207 (TSST…SNQE), 1295-1339 (STTT…PPID), 1422-1474 (PYYP…LSTP), 1597-1647 (PPAT…TTIV), 1667-1849 (PIVK…PPPV), 1961-1985 (TTVP…NGLA), 2055-2106 (TSTV…NGLT), and 2122-2280 (LSGI…NKND). Positions 936-953 (NVNSNNNNNGGGNSLKDG) are enriched in low complexity. Positions 982-995 (VKKKSRTASKRSFR) are enriched in basic residues. The segment covering 1000-1013 (ANETNRTPKNQPKP) has biased composition (polar residues). Low complexity-rich tracts occupy residues 1069 to 1092 (NQSS…NNIN), 1145 to 1186 (TSST…TGSA), 1195 to 1205 (VNNNNNNNLSN), and 1306 to 1325 (TTTP…QLQQ). Residues 1326–1337 (LPPPPPPPPKPP) show a composition bias toward pro residues. A compositionally biased stretch (low complexity) spans 1427–1474 (PSSTTTNSATSTPTSTPTSTPSTSASTLTPTSTPTSTPVPAPTSLSTP). Positions 1597 to 1606 (PPATITPILP) are enriched in pro residues. Low complexity predominate over residues 1618–1637 (SSSSSSSSSSSSSSSSSSSS). Polar residues-rich tracts occupy residues 1638-1647 (TTKNNSTTIV) and 1671-1701 (QESN…KTLL). Low complexity-rich tracts occupy residues 1702-1735 (PSNS…NPSS) and 1743-1809 (TSNK…TLKP). Positions 1829–1844 (APTNSTNQNTIPNATT) are enriched in polar residues. Composition is skewed to low complexity over residues 1961–1970 (TTVPGTTTTT) and 2065–2097 (NNMT…QQST). Positions 2129–2138 (NTLSGKSPTP) are enriched in polar residues. The span at 2154-2209 (PSLSSSSANPISITNNTTSLSQQSNTTNTMPSTVSLSSGSTSINSNSSNSKSLRSP) shows a compositional bias: low complexity. Positions 2210 to 2278 (KSSDNDGKES…NNNDKFDSNK (69 aa)) are enriched in basic and acidic residues.

This chain is Myb-like protein U (mybU), found in Dictyostelium discoideum (Social amoeba).